The sequence spans 470 residues: Sorting nexin-17 (470 aa).

Residues 1 to 109 form the PX domain; the sequence is MHFSIPETES…SFLRRAQQET (109 aa). 4 residues coordinate a 1,2-diacyl-sn-glycero-3-phospho-(1D-myo-inositol-3-phosphate): Arg-36, Ser-38, Lys-62, and Arg-75. A Ras-associating domain is found at 115–206; that stretch reads EEVSLEVLLS…YKIVLRKSYW (92 aa). Positions 115–432 are FERM-like; the sequence is EEVSLEVLLS…DASRESMVKL (318 aa). The segment at 270-432 is PTB-like F3 module; it reads GYLRFDACVA…DASRESMVKL (163 aa). 7 positions are modified to phosphoserine: Ser-336, Ser-407, Ser-409, Ser-415, Ser-421, Ser-437, and Ser-440. Residues 400-426 are disordered; that stretch reads VGGTLRRSDSQQAVKSPPLLESPDASR.

Belongs to the sorting nexin family. In terms of assembly, monomer. Interacts with APP (via cytoplasmic YXNPXY motif). Interacts with KIF1B. Interacts with the C-termini of P-selectin, PTC, LDLR, VLDLR, LRP1 and LRP8. Interacts with KRIT1 (via N-terminus). Interacts with HRAS. Interacts with ITGB1 and ITGB5 (via NPxY motif). Interacts with CCDC22 and CCDC93; the interaction associates SNX17 with the CCC complex. Interacts (via C-terminus) with VPS26C and VPS35L; the interactions are direct and associate SNX17 with the retriever complex.

It is found in the cytoplasm. The protein resides in the early endosome. It localises to the cytoplasmic vesicle membrane. In terms of biological role, critical regulator of endosomal recycling of numerous surface proteins, including integrins, signaling receptor and channels. Binds to NPxY sequences in the cytoplasmic tails of target cargos. Associates with retriever and CCC complexes to prevent lysosomal degradation and promote cell surface recycling of numerous cargos such as integrins ITGB1, ITGB5 and their associated alpha subunits. Also required for maintenance of normal cell surface levels of APP and LRP1. Interacts with membranes containing phosphatidylinositol 3-phosphate (PtdIns(3P)). The chain is Sorting nexin-17 (SNX17) from Bos taurus (Bovine).